The chain runs to 585 residues: SCF E3 ubiquitin ligase complex F-box protein grrA (585 aa).

Positions 1-10 are enriched in polar residues; sequence MARSRQPTRF. Disordered regions lie at residues 1–34 and 41–60; these read MARS…DTDF and DSQS…QNDP. Low complexity predominate over residues 11 to 25; that stretch reads SSEAPSESSSSTSPE. The 49-residue stretch at 65-113 folds into the F-box domain; it reads PPIAYLPPEILISIFSKLSSPRDLLSCLLVCRIWALNCVGLLWHRPSCN. LRR repeat units follow at residues 147–171, 172–197, 198–223, 224–249, 250–275, 276–301, 302–329, 330–355, 356–381, 382–407, 408–432, 433–465, and 466–491; these read TEDV…TLTN, CRKL…DVSE, LRSL…NITG, CVKV…KLNG, VSQV…DLQE, CKLV…RLAH, CTEI…DLTA, CENI…VLAK, CKFI…HLGH, CSNI…DLAC, CSRL…GLVK, CQLI…HLSY, and CVNL…SLTG.

As to quaternary structure, part of a SCF E3 ubiquitin ligase complex. Specifically expressed in ascus mother cells.

It localises to the cytoplasm. Its function is as follows. Involved in meiosis and required for ascospore formation. Involved in substrate recognition in ubiquitin-dependent degradation. This is SCF E3 ubiquitin ligase complex F-box protein grrA (grrA) from Emericella nidulans (strain FGSC A4 / ATCC 38163 / CBS 112.46 / NRRL 194 / M139) (Aspergillus nidulans).